We begin with the raw amino-acid sequence, 429 residues long: Hydrogenobyrinate a,c-diamide synthase (429 aa).

The GATase cobBQ-type domain maps to 240-429 (RTAVARDVAF…SFMHLIDFSE (190 aa)). Cys-323 serves as the catalytic Nucleophile.

It belongs to the CobB/CbiA family. The cofactor is Mg(2+).

The enzyme catalyses hydrogenobyrinate + 2 L-glutamine + 2 ATP + 2 H2O = hydrogenobyrinate a,c-diamide + 2 L-glutamate + 2 ADP + 2 phosphate + 2 H(+). It participates in cofactor biosynthesis; adenosylcobalamin biosynthesis; cob(II)yrinate a,c-diamide from precorrin-2 (aerobic route): step 9/10. Catalyzes the ATP-dependent amidation of the two carboxylate groups at positions a and c of hydrogenobyrinate, using either L-glutamine or ammonia as the nitrogen source. This is Hydrogenobyrinate a,c-diamide synthase from Rhizobium meliloti (strain 1021) (Ensifer meliloti).